Consider the following 143-residue polypeptide: Ribosome-binding factor A (143 aa).

The segment at Val-123–Asn-143 is disordered. Residues Arg-124–Ala-136 are compositionally biased toward low complexity.

The protein belongs to the RbfA family. Monomer. Binds 30S ribosomal subunits, but not 50S ribosomal subunits or 70S ribosomes.

The protein localises to the cytoplasm. One of several proteins that assist in the late maturation steps of the functional core of the 30S ribosomal subunit. Associates with free 30S ribosomal subunits (but not with 30S subunits that are part of 70S ribosomes or polysomes). Required for efficient processing of 16S rRNA. May interact with the 5'-terminal helix region of 16S rRNA. The chain is Ribosome-binding factor A from Corynebacterium urealyticum (strain ATCC 43042 / DSM 7109).